We begin with the raw amino-acid sequence, 446 residues long: Ribosome biogenesis protein WDR12 homolog (446 aa).

The ubiquitin-like (UBL) domain stretch occupies residues 21 to 105; it reads VQITFFSKDK…ETILKIECII (85 aa). 2 WD repeats span residues 171–211 and 216–255; these read KCSG…LVEK and GHER…EATI. The tract at residues 256–275 is disordered; sequence YEKEEEESSAKKKRKKDTRT. 4 WD repeats span residues 284-324, 326-365, 371-412, and 416-446; these read GHRD…EVSR, KGPK…GAMV, GHQN…SSLF, and GHED…FETS.

This sequence belongs to the WD repeat WDR12/YTM1 family.

It localises to the nucleus. It is found in the nucleolus. The protein localises to the nucleoplasm. Required for maturation of ribosomal RNAs and formation of the large ribosomal subunit. This chain is Ribosome biogenesis protein WDR12 homolog, found in Caenorhabditis briggsae.